Here is a 166-residue protein sequence, read N- to C-terminus: Kelch repeat protein B10 (166 aa).

2 Kelch repeats span residues 25–76 and 77–129; these read TIFV…STFG and MLYF…KLNN.

Belongs to the poxviruses Kelch family.

The chain is Kelch repeat protein B10 from Oryctolagus cuniculus (Rabbit).